The following is a 413-amino-acid chain: Short-chain specific acyl-CoA dehydrogenase, mitochondrial (413 aa).

The N-terminal 24 residues, 1-24, are a transit peptide targeting the mitochondrion; it reads MAAALLARACGPVRGALWPRDCRR. Position 27 is a phosphothreonine (threonine 27). Residue lysine 51 is modified to N6-acetyllysine; alternate. Lysine 51 carries the post-translational modification N6-succinyllysine; alternate. Residue lysine 72 is modified to N6-acetyllysine. Residue lysine 129 is modified to N6-acetyllysine; alternate. The residue at position 129 (lysine 129) is an N6-succinyllysine; alternate. FAD contacts are provided by residues 152–161 and 185–187; these read FALSEPGNGS and WIT. Residue serine 161 participates in substrate binding. N6-acetyllysine is present on lysine 208. Position 262 is an N6-acetyllysine; alternate (lysine 262). At lysine 262 the chain carries N6-succinyllysine; alternate. 269 to 272 is a binding site for substrate; that stretch reads DMGR. An FAD-binding site is contributed by arginine 297. At lysine 306 the chain carries N6-acetyllysine; alternate. An N6-succinyllysine; alternate modification is found at lysine 306. Residues glutamine 308 and 366 to 370 each bind FAD; that span reads QILGG. Glutamate 393 serves as the catalytic Proton acceptor. Glycine 394 provides a ligand contact to substrate. 395–397 contributes to the FAD binding site; that stretch reads TSE.

This sequence belongs to the acyl-CoA dehydrogenase family. As to quaternary structure, homotetramer. It depends on FAD as a cofactor.

It is found in the mitochondrion matrix. It catalyses the reaction a short-chain 2,3-saturated fatty acyl-CoA + oxidized [electron-transfer flavoprotein] + H(+) = a short-chain (2E)-enoyl-CoA + reduced [electron-transfer flavoprotein]. It carries out the reaction butanoyl-CoA + oxidized [electron-transfer flavoprotein] + H(+) = (2E)-butenoyl-CoA + reduced [electron-transfer flavoprotein]. The enzyme catalyses pentanoyl-CoA + oxidized [electron-transfer flavoprotein] + H(+) = (2E)-pentenoyl-CoA + reduced [electron-transfer flavoprotein]. The catalysed reaction is hexanoyl-CoA + oxidized [electron-transfer flavoprotein] + H(+) = (2E)-hexenoyl-CoA + reduced [electron-transfer flavoprotein]. Its pathway is lipid metabolism; mitochondrial fatty acid beta-oxidation. Short-chain specific acyl-CoA dehydrogenase is one of the acyl-CoA dehydrogenases that catalyze the first step of mitochondrial fatty acid beta-oxidation, an aerobic process breaking down fatty acids into acetyl-CoA and allowing the production of energy from fats. The first step of fatty acid beta-oxidation consists in the removal of one hydrogen from C-2 and C-3 of the straight-chain fatty acyl-CoA thioester, resulting in the formation of trans-2-enoyl-CoA. Among the different mitochondrial acyl-CoA dehydrogenases, short-chain specific acyl-CoA dehydrogenase acts specifically on acyl-CoAs with saturated 4 to 6 carbons long primary chains. The sequence is that of Short-chain specific acyl-CoA dehydrogenase, mitochondrial (ACADS) from Sus scrofa (Pig).